The following is a 235-amino-acid chain: Cytochrome c oxidase subunit 2 (235 aa).

Residues 1-14 (MPYPMQLGFQDATS) lie on the Mitochondrial intermembrane side of the membrane. A helical membrane pass occupies residues 15-45 (PIMEELMYFHDHTLMIVFLISSLVLYIIILM). The Mitochondrial matrix portion of the chain corresponds to 46–59 (LTTKLTHTSTMDAQ). Residues 60–87 (EVETIWTILPAVILILIALPSLRILYMM) traverse the membrane as a helical segment. Over 88–235 (DEIYNPYLTV…MQSFLSYLYI (148 aa)) the chain is Mitochondrial intermembrane. Residues histidine 161, cysteine 196, glutamate 198, cysteine 200, histidine 204, and methionine 207 each coordinate Cu cation. Mg(2+) is bound at residue glutamate 198. Position 218 is a phosphotyrosine (tyrosine 218).

This sequence belongs to the cytochrome c oxidase subunit 2 family. In terms of assembly, component of the cytochrome c oxidase (complex IV, CIV), a multisubunit enzyme composed of 14 subunits. The complex is composed of a catalytic core of 3 subunits MT-CO1, MT-CO2 and MT-CO3, encoded in the mitochondrial DNA, and 11 supernumerary subunits COX4I, COX5A, COX5B, COX6A, COX6B, COX6C, COX7A, COX7B, COX7C, COX8 and NDUFA4, which are encoded in the nuclear genome. The complex exists as a monomer or a dimer and forms supercomplexes (SCs) in the inner mitochondrial membrane with NADH-ubiquinone oxidoreductase (complex I, CI) and ubiquinol-cytochrome c oxidoreductase (cytochrome b-c1 complex, complex III, CIII), resulting in different assemblies (supercomplex SCI(1)III(2)IV(1) and megacomplex MCI(2)III(2)IV(2)). Found in a complex with TMEM177, COA6, COX18, COX20, SCO1 and SCO2. Interacts with TMEM177 in a COX20-dependent manner. Interacts with COX20. Interacts with COX16. It depends on Cu cation as a cofactor.

The protein resides in the mitochondrion inner membrane. The enzyme catalyses 4 Fe(II)-[cytochrome c] + O2 + 8 H(+)(in) = 4 Fe(III)-[cytochrome c] + 2 H2O + 4 H(+)(out). Its function is as follows. Component of the cytochrome c oxidase, the last enzyme in the mitochondrial electron transport chain which drives oxidative phosphorylation. The respiratory chain contains 3 multisubunit complexes succinate dehydrogenase (complex II, CII), ubiquinol-cytochrome c oxidoreductase (cytochrome b-c1 complex, complex III, CIII) and cytochrome c oxidase (complex IV, CIV), that cooperate to transfer electrons derived from NADH and succinate to molecular oxygen, creating an electrochemical gradient over the inner membrane that drives transmembrane transport and the ATP synthase. Cytochrome c oxidase is the component of the respiratory chain that catalyzes the reduction of oxygen to water. Electrons originating from reduced cytochrome c in the intermembrane space (IMS) are transferred via the dinuclear copper A center (CU(A)) of subunit 2 and heme A of subunit 1 to the active site in subunit 1, a binuclear center (BNC) formed by heme A3 and copper B (CU(B)). The BNC reduces molecular oxygen to 2 water molecules using 4 electrons from cytochrome c in the IMS and 4 protons from the mitochondrial matrix. This Didelphis virginiana (North American opossum) protein is Cytochrome c oxidase subunit 2 (MT-CO2).